The following is a 91-amino-acid chain: Probable Fe(2+)-trafficking protein (91 aa).

Belongs to the Fe(2+)-trafficking protein family.

Its function is as follows. Could be a mediator in iron transactions between iron acquisition and iron-requiring processes, such as synthesis and/or repair of Fe-S clusters in biosynthetic enzymes. This Polynucleobacter necessarius subsp. necessarius (strain STIR1) protein is Probable Fe(2+)-trafficking protein.